A 683-amino-acid polypeptide reads, in one-letter code: MPDRSTKTTMGTEDMHERKVSVEPQDSHQDAQPRGMFHNIKFFVLCHSLLQLTQLMISGYLKSSISTVEKRFGLSSQISGLLAAFNEVGNVSLILFVSYFGSRVHRPRMIGYGALLVATAGLLMALPHFISEPYRYDHSSSDNRSLDFEASLCLPTTMAPASALSNGSCSSHTETKHLTMVGIMFAAQTLLGIGGVPIQPFGISYIDDFAHHSNSPLYIGILFGITTMGPGLAYGLGSLMLRLYVDIDRMPEGGINLTPKDPRWVGAWWLGFLISSGLVVLASSPYFFFPREMPKEKHEFHFRRKVLASAASTASKGEDLSSQHEPLKKQAGLAQIAPDLTLVQFVKVFPRVLLRNLRHPIFLLVVLSQVCTSSMVAGMATFLPKFLERQFSITASFANMLLGCLTIPLVIVGIMMGGVLVKRLHLSPVQCSALCLLGSLLCLLFSVPLFFIGCSTHQIAGITQDLGAQPGPSLFPGCSEPCSCQSDDFNPVCDTSAYVEYTTPCHAGCTGRVVQEALGKSQVFYTNCSCVAGNGTVPAGSCESACSRLVLPFIVLFSLGAGLASITHTPSFMLILRGVKKEDKTLAVGMQFMLLRVLAWMPSPVIHGSAIDTTCVHWALTCGRRAVCRYYDHDLLRNRFIGLQFFFKSGSLVCFTLVLAILRQQSREASTRTTVKSSELQQL.

The segment at 1-30 (MPDRSTKTTMGTEDMHERKVSVEPQDSHQD) is disordered. Topologically, residues 1–41 (MPDRSTKTTMGTEDMHERKVSVEPQDSHQDAQPRGMFHNIK) are cytoplasmic. The segment covering 13-30 (EDMHERKVSVEPQDSHQD) has biased composition (basic and acidic residues). The residue at position 21 (Ser21) is a Phosphoserine. A helical membrane pass occupies residues 42–61 (FFVLCHSLLQLTQLMISGYL). Residues 62-80 (KSSISTVEKRFGLSSQISG) are Extracellular-facing. Residues 81–101 (LLAAFNEVGNVSLILFVSYFG) traverse the membrane as a helical segment. Residues 102-107 (SRVHRP) lie on the Cytoplasmic side of the membrane. A helical membrane pass occupies residues 108–132 (RMIGYGALLVATAGLLMALPHFISE). The Extracellular portion of the chain corresponds to 133 to 177 (PYRYDHSSSDNRSLDFEASLCLPTTMAPASALSNGSCSSHTETKH). Residues Asn143 and Asn166 are each glycosylated (N-linked (GlcNAc...) asparagine). A helical transmembrane segment spans residues 178–207 (LTMVGIMFAAQTLLGIGGVPIQPFGISYID). Residues 208-226 (DFAHHSNSPLYIGILFGIT) lie on the Cytoplasmic side of the membrane. A helical transmembrane segment spans residues 227-247 (TMGPGLAYGLGSLMLRLYVDI). The Extracellular segment spans residues 248 to 265 (DRMPEGGINLTPKDPRWV). A helical membrane pass occupies residues 266-290 (GAWWLGFLISSGLVVLASSPYFFFP). The Cytoplasmic segment spans residues 291-355 (REMPKEKHEF…VKVFPRVLLR (65 aa)). 2 positions are modified to phosphoserine: Ser312 and Ser315. The helical transmembrane segment at 356–377 (NLRHPIFLLVVLSQVCTSSMVA) threads the bilayer. Topologically, residues 378 to 397 (GMATFLPKFLERQFSITASF) are extracellular. A helical transmembrane segment spans residues 398–421 (ANMLLGCLTIPLVIVGIMMGGVLV). Residues 422–425 (KRLH) lie on the Cytoplasmic side of the membrane. Residues 426-449 (LSPVQCSALCLLGSLLCLLFSVPL) traverse the membrane as a helical segment. The Extracellular portion of the chain corresponds to 450 to 553 (FFIGCSTHQI…SACSRLVLPF (104 aa)). The Kazal-like domain maps to 472–532 (PSLFPGCSEP…VFYTNCSCVA (61 aa)). 3 disulfide bridges follow: Cys478–Cys509, Cys484–Cys505, and Cys493–Cys530. Residues Asn527 and Asn534 are each glycosylated (N-linked (GlcNAc...) asparagine). Residues 554–576 (IVLFSLGAGLASITHTPSFMLIL) traverse the membrane as a helical segment. Residues 577 to 585 (RGVKKEDKT) lie on the Cytoplasmic side of the membrane. A helical transmembrane segment spans residues 586–611 (LAVGMQFMLLRVLAWMPSPVIHGSAI). Residues 612-644 (DTTCVHWALTCGRRAVCRYYDHDLLRNRFIGLQ) are Extracellular-facing. Residues 645–662 (FFFKSGSLVCFTLVLAIL) traverse the membrane as a helical segment. At 663–683 (RQQSREASTRTTVKSSELQQL) the chain is on the cytoplasmic side.

The protein belongs to the organo anion transporter (TC 2.A.60) family. As to expression, expressed in liver, kidney, small intestine mucosa, large intestine, brain, lung, spleen, stomach and heart.

Its subcellular location is the cell membrane. The protein localises to the basal cell membrane. It localises to the apical cell membrane. It carries out the reaction dehydroepiandrosterone 3-sulfate(out) = dehydroepiandrosterone 3-sulfate(in). The catalysed reaction is estrone 3-sulfate(out) = estrone 3-sulfate(in). It catalyses the reaction estrone 3-sulfate(out) + hydrogencarbonate(in) = estrone 3-sulfate(in) + hydrogencarbonate(out). The enzyme catalyses taurocholate(out) = taurocholate(in). It carries out the reaction coproporphyrin III(out) = coproporphyrin III(in). The catalysed reaction is substance P(out) = substance P(in). It catalyses the reaction pregnenolone sulfate(out) = pregnenolone sulfate(in). The enzyme catalyses prostaglandin E2(out) = prostaglandin E2(in). It carries out the reaction prostaglandin D2(out) = prostaglandin D2(in). The catalysed reaction is L-thyroxine(out) = L-thyroxine(in). Mediates the Na(+)-independent transport of steroid sulfate conjugates such as estrone 3-sulfate (E1S), dehydroepiandrosterone sulfate (DHEA-S) and pregnenolone sulfate (PregS) and other specific organic anions. Responsible for the transport of E1S through the basal membrane of syncytiotrophoblast, highlighting a potential role in the placental absorption of fetal-derived sulfated steroids including DHEA-S. Also facilitates the uptake of sulfated steroids at the basal/sinusoidal membrane of hepatocytes, therefore accounting for the major part of organic anions clearance of liver. Mediates the intestinal uptake of sulfated steroids. Mediates the uptake of the neurosteroids DHEA-S and PregS into the endothelial cells of the blood-brain barrier as the first step to enter the brain. Also plays a role in the reuptake of neuropeptides such as substance P/TAC1 and vasoactive intestinal peptide/VIP released from retinal neurons. May act as a heme transporter that promotes cellular iron availability. Also transports heme by-product coproporphyrin III (CPIII), and may be involved in their hepatic disposition. Mediates the uptake of other substrates such as prostaglandins D2 (PGD2), E1 (PGE1) and E2 (PGE2), taurocholate, L-thyroxine, leukotriene C4 and thromboxane B2. May contribute to regulate the transport of organic compounds in testis across the blood-testis-barrier. Shows a pH-sensitive substrate specificity which may be ascribed to the protonation state of the binding site and leads to a stimulation of substrate transport in an acidic microenvironment. The exact transport mechanism has not been yet deciphered but most likely involves an anion exchange, coupling the cellular uptake of organic substrate with the efflux of an anionic compound. Hydrogencarbonate/HCO3(-) acts as a probable counteranion that exchanges for organic anions. Cytoplasmic glutamate may also act as counteranion in the placenta. An inwardly directed proton gradient has also been proposed as the driving force of E1S uptake with a (H(+):E1S) stoichiometry of (1:1). The chain is Solute carrier organic anion transporter family member 2B1 from Mus musculus (Mouse).